Consider the following 586-residue polypeptide: Arginine--tRNA ligase (586 aa).

The 'HIGH' region motif lies at 131 to 141; that stretch reads ANPTGPMHVGH.

Belongs to the class-I aminoacyl-tRNA synthetase family. In terms of assembly, monomer.

It localises to the cytoplasm. It carries out the reaction tRNA(Arg) + L-arginine + ATP = L-arginyl-tRNA(Arg) + AMP + diphosphate. This chain is Arginine--tRNA ligase, found in Rhizobium rhizogenes (strain K84 / ATCC BAA-868) (Agrobacterium radiobacter).